A 375-amino-acid polypeptide reads, in one-letter code: Probable pectin lyase C (375 aa).

The N-terminal stretch at 1–20 (MKITSTIPAVLLGLAPLSAA) is a signal peptide. 2 disulfides stabilise this stretch: Cys-83-Cys-100 and Cys-92-Cys-220. The active site involves Arg-250. A disulfide bond links Cys-317 and Cys-325.

It belongs to the polysaccharide lyase 1 family.

Its subcellular location is the secreted. The enzyme catalyses Eliminative cleavage of (1-&gt;4)-alpha-D-galacturonan methyl ester to give oligosaccharides with 4-deoxy-6-O-methyl-alpha-D-galact-4-enuronosyl groups at their non-reducing ends.. Its function is as follows. Pectinolytic enzymes consist of four classes of enzymes: pectin lyase, polygalacturonase, pectin methylesterase and rhamnogalacturonase. Among pectinolytic enzymes, pectin lyase is the most important in depolymerization of pectin, since it cleaves internal glycosidic bonds of highly methylated pectins. The sequence is that of Probable pectin lyase C (pelC) from Aspergillus oryzae (strain ATCC 42149 / RIB 40) (Yellow koji mold).